The following is a 167-amino-acid chain: MFISMWAQDKNGLIGKDGLLPWRLPNDMRFFREHTMDKILVMGRKTYEGMGKLSLPYRHIIVLTTQKDFKVEKNAEVLHSIDELLAYAKDIPEDIYVSGGSRIFQALLPETKIIWRTLIDAEFEGDTFIGEIDFTSFELVEEHEGIVNQENQYPHRFQKWQKMSKVV.

A DHFR domain is found at 1 to 162; it reads MFISMWAQDK…YPHRFQKWQK (162 aa). NADP(+) contacts are provided by residues alanine 7 and 13 to 19; that span reads LIGKDGL. Aspartate 27 contributes to the substrate binding site. 45 to 46 provides a ligand contact to NADP(+); it reads KT. Arginine 58 is a substrate binding site. NADP(+)-binding positions include 64 to 65 and 99 to 106; these read TT and GGSRIFQA. Threonine 117 is a binding site for substrate.

It belongs to the dihydrofolate reductase family.

The catalysed reaction is (6S)-5,6,7,8-tetrahydrofolate + NADP(+) = 7,8-dihydrofolate + NADPH + H(+). The protein operates within cofactor biosynthesis; tetrahydrofolate biosynthesis; 5,6,7,8-tetrahydrofolate from 7,8-dihydrofolate: step 1/1. Key enzyme in folate metabolism. Catalyzes an essential reaction for de novo glycine and purine synthesis, and for DNA precursor synthesis. The polypeptide is Dihydrofolate reductase (folA) (Enterococcus faecium (Streptococcus faecium)).